The following is a 272-amino-acid chain: Heat stress transcription factor A-7a (272 aa).

Residues 1-26 (MMNPFLPEGCDPPPPPQPMEGLHENA) form a disordered region. The DNA-binding element occupies 27–121 (PPPFLTKTFE…LLKNIKRRNP (95 aa)). The tract at residues 132 to 186 (ACNELRREKQVLMMEIVSLRQQQQTTKSYIKAMEQRIEGTERKQRQMMSFLARAM) is hydrophobic repeat HR-A/B. The Bipartite nuclear localization signal motif lies at 201–216 (KKIKELEDNESAKRKR). Positions 203–212 (IKELEDNESA) are enriched in basic and acidic residues. The interval 203–223 (IKELEDNESAKRKRGSSSMSE) is disordered. The short motif at 256 to 265 (DGFWEELLSD) is the AHA element.

Belongs to the HSF family. Class A subfamily. As to quaternary structure, homotrimer. Post-translationally, exhibits temperature-dependent phosphorylation.

Its subcellular location is the nucleus. Functionally, transcriptional activator that specifically binds DNA sequence 5'-AGAAnnTTCT-3' known as heat shock promoter elements (HSE). This Arabidopsis thaliana (Mouse-ear cress) protein is Heat stress transcription factor A-7a (HSFA7A).